The chain runs to 39 residues: Photosystem II reaction center protein J (39 aa).

The helical transmembrane segment at 9–29 threads the bilayer; that stretch reads LWLVVTFGGIVVLTVLGIFIY.

It belongs to the PsbJ family. As to quaternary structure, PSII is composed of 1 copy each of membrane proteins PsbA, PsbB, PsbC, PsbD, PsbE, PsbF, PsbH, PsbI, PsbJ, PsbK, PsbL, PsbM, PsbT, PsbY, PsbZ, Psb30/Ycf12, at least 3 peripheral proteins of the oxygen-evolving complex and a large number of cofactors. It forms dimeric complexes.

The protein resides in the plastid. It is found in the chloroplast thylakoid membrane. One of the components of the core complex of photosystem II (PSII). PSII is a light-driven water:plastoquinone oxidoreductase that uses light energy to abstract electrons from H(2)O, generating O(2) and a proton gradient subsequently used for ATP formation. It consists of a core antenna complex that captures photons, and an electron transfer chain that converts photonic excitation into a charge separation. In Cyanidium caldarium (Red alga), this protein is Photosystem II reaction center protein J.